A 376-amino-acid polypeptide reads, in one-letter code: Erythronate-4-phosphate dehydrogenase (376 aa).

Residues Ser-45 and Thr-67 each coordinate substrate. Asp-147 provides a ligand contact to NAD(+). Arg-209 is a catalytic residue. Asp-233 is a binding site for NAD(+). Glu-238 is an active-site residue. His-255 (proton donor) is an active-site residue. An NAD(+)-binding site is contributed by Gly-258. Substrate is bound at residue Tyr-259.

This sequence belongs to the D-isomer specific 2-hydroxyacid dehydrogenase family. PdxB subfamily. Homodimer.

The protein localises to the cytoplasm. The enzyme catalyses 4-phospho-D-erythronate + NAD(+) = (R)-3-hydroxy-2-oxo-4-phosphooxybutanoate + NADH + H(+). It functions in the pathway cofactor biosynthesis; pyridoxine 5'-phosphate biosynthesis; pyridoxine 5'-phosphate from D-erythrose 4-phosphate: step 2/5. In terms of biological role, catalyzes the oxidation of erythronate-4-phosphate to 3-hydroxy-2-oxo-4-phosphonooxybutanoate. The polypeptide is Erythronate-4-phosphate dehydrogenase (Shewanella loihica (strain ATCC BAA-1088 / PV-4)).